The sequence spans 279 residues: Acetylglutamate kinase (279 aa).

Substrate is bound by residues 64–65 (GG), Arg86, and Asn177.

The protein belongs to the acetylglutamate kinase family. ArgB subfamily.

The protein localises to the cytoplasm. It catalyses the reaction N-acetyl-L-glutamate + ATP = N-acetyl-L-glutamyl 5-phosphate + ADP. It functions in the pathway amino-acid biosynthesis; L-arginine biosynthesis; N(2)-acetyl-L-ornithine from L-glutamate: step 2/4. In terms of biological role, catalyzes the ATP-dependent phosphorylation of N-acetyl-L-glutamate. The protein is Acetylglutamate kinase of Campylobacter jejuni subsp. doylei (strain ATCC BAA-1458 / RM4099 / 269.97).